A 379-amino-acid polypeptide reads, in one-letter code: MSMLSTLRTAGSLRTFSRSACYSFQRFSSTKAAAGTYEGVKNANGNYTVTMIAGDGIGPEIAQSVERIFKAAKVPIEWERVKVYPILKNGTTTIPDDAKESVRKNKVALKGPLATPIGKGHVSMNLTLRRTFGLFANVRPCVSITGYKTPYDNVNTVLIRENTEGEYSGIEHEVIPGVVQSIKLITRAASERVIRYAFQYARQTGKNNITVVHKATIMRMADGLFLECAKELAPEYPDIELREEILDNACLKIVTDPVPYNNTVMVMPNLYGDIVSDMCAGLIGGLGLTPSGNIGNQASIFEAVHGTAPDIAGKGLANPTALLLSSVMMLKHMNLNDYAKRIESAIFDTLANNPDARTKDLGGKSNNVQYTDAIISKLK.

Residues 1–27 (MSMLSTLRTAGSLRTFSRSACYSFQRF) constitute a mitochondrion transit peptide. 4 residues coordinate substrate: R129, R139, R160, and D247. Mg(2+)-binding residues include D247, D273, and D277.

Belongs to the isocitrate and isopropylmalate dehydrogenases family. As to quaternary structure, octamer of two non-identical subunits IDH1 and IDH2. It depends on Mg(2+) as a cofactor. Mn(2+) serves as cofactor.

Its subcellular location is the mitochondrion. The enzyme catalyses D-threo-isocitrate + NAD(+) = 2-oxoglutarate + CO2 + NADH. Performs an essential role in the oxidative function of the citric acid cycle and is involved in glutamate biosynthesis. Also binds RNA; specifically to the 5'-untranslated leaders of mitochondrial mRNAs. The chain is Isocitrate dehydrogenase [NAD] subunit 2, mitochondrial (idh2) from Schizosaccharomyces pombe (strain 972 / ATCC 24843) (Fission yeast).